The chain runs to 327 residues: Nocardicin C-9' epimerase (327 aa).

Lys-43 carries the N6-(pyridoxal phosphate)lysine modification.

It belongs to the ACC deaminase/D-cysteine desulfhydrase family. Pyridoxal 5'-phosphate is required as a cofactor.

It carries out the reaction isonocardicin C = nocardicin C. It catalyses the reaction isonocardicin A = nocardicin A. It functions in the pathway antibiotic biosynthesis. Involved in the biosynthesis of the beta-lactam antibiotic nocardicin A. Catalyzes the interconversion of the nocardicin homoseryl side chain in both nocardicin A with isonocardicin A, and nocardicin C with isonocardicin C. The sequence is that of Nocardicin C-9' epimerase from Nocardia uniformis subsp. tsuyamanensis.